Reading from the N-terminus, the 62-residue chain is Large ribosomal subunit protein bL28 (62 aa).

The protein belongs to the bacterial ribosomal protein bL28 family.

This is Large ribosomal subunit protein bL28 from Staphylococcus epidermidis (strain ATCC 12228 / FDA PCI 1200).